Consider the following 105-residue polypeptide: Flagellar transcriptional regulator FlhD (105 aa).

It belongs to the FlhD family. In terms of assembly, homodimer; disulfide-linked. Forms a heterohexamer composed of two FlhC and four FlhD subunits. Each FlhC binds a FlhD dimer, forming a heterotrimer, and a hexamer assembles by dimerization of two heterotrimers.

It localises to the cytoplasm. Functionally, functions in complex with FlhC as a master transcriptional regulator that regulates transcription of several flagellar and non-flagellar operons by binding to their promoter region. Activates expression of class 2 flagellar genes, including fliA, which is a flagellum-specific sigma factor that turns on the class 3 genes. Also regulates genes whose products function in a variety of physiological pathways. The polypeptide is Flagellar transcriptional regulator FlhD (Ralstonia pickettii (strain 12J)).